Consider the following 351-residue polypeptide: Phospho-N-acetylmuramoyl-pentapeptide-transferase (351 aa).

Helical transmembrane passes span 17-37 (TAYA…FIIL), 63-83 (IPTM…FFWI), 85-105 (FWNI…CLGF), 124-144 (FKIY…YYFG), 158-178 (SLKL…LISA), 190-210 (GLAI…AYLA), 230-250 (LVVF…FNAY), 254-274 (IMMG…TALI), 279-299 (ILFA…IIQV), and 328-348 (QVVI…LSTL).

The protein belongs to the glycosyltransferase 4 family. MraY subfamily. Requires Mg(2+) as cofactor.

The protein resides in the cell inner membrane. The catalysed reaction is UDP-N-acetyl-alpha-D-muramoyl-L-alanyl-gamma-D-glutamyl-meso-2,6-diaminopimeloyl-D-alanyl-D-alanine + di-trans,octa-cis-undecaprenyl phosphate = di-trans,octa-cis-undecaprenyl diphospho-N-acetyl-alpha-D-muramoyl-L-alanyl-D-glutamyl-meso-2,6-diaminopimeloyl-D-alanyl-D-alanine + UMP. It participates in cell wall biogenesis; peptidoglycan biosynthesis. Its function is as follows. Catalyzes the initial step of the lipid cycle reactions in the biosynthesis of the cell wall peptidoglycan: transfers peptidoglycan precursor phospho-MurNAc-pentapeptide from UDP-MurNAc-pentapeptide onto the lipid carrier undecaprenyl phosphate, yielding undecaprenyl-pyrophosphoryl-MurNAc-pentapeptide, known as lipid I. The chain is Phospho-N-acetylmuramoyl-pentapeptide-transferase from Borrelia turicatae (strain 91E135).